The primary structure comprises 389 residues: Chalcone synthase 3 (389 aa).

The active site involves Cys-164.

This sequence belongs to the thiolase-like superfamily. Chalcone/stilbene synthases family.

The catalysed reaction is (E)-4-coumaroyl-CoA + 3 malonyl-CoA + 3 H(+) = 2',4,4',6'-tetrahydroxychalcone + 3 CO2 + 4 CoA. Its pathway is secondary metabolite biosynthesis; flavonoid biosynthesis. In terms of biological role, the primary product of this enzyme is 4,2',4',6'-tetrahydroxychalcone (also termed naringenin-chalcone or chalcone) which can under specific conditions spontaneously isomerize into naringenin. This chain is Chalcone synthase 3 (CHS3), found in Camellia sinensis (Tea plant).